The following is a 463-amino-acid chain: ATP synthase subunit beta (463 aa).

152 to 159 (GGAGVGKT) lines the ATP pocket.

This sequence belongs to the ATPase alpha/beta chains family. F-type ATPases have 2 components, CF(1) - the catalytic core - and CF(0) - the membrane proton channel. CF(1) has five subunits: alpha(3), beta(3), gamma(1), delta(1), epsilon(1). CF(0) has three main subunits: a(1), b(2) and c(9-12). The alpha and beta chains form an alternating ring which encloses part of the gamma chain. CF(1) is attached to CF(0) by a central stalk formed by the gamma and epsilon chains, while a peripheral stalk is formed by the delta and b chains.

The protein resides in the cell inner membrane. The catalysed reaction is ATP + H2O + 4 H(+)(in) = ADP + phosphate + 5 H(+)(out). Produces ATP from ADP in the presence of a proton gradient across the membrane. The catalytic sites are hosted primarily by the beta subunits. In Shewanella oneidensis (strain ATCC 700550 / JCM 31522 / CIP 106686 / LMG 19005 / NCIMB 14063 / MR-1), this protein is ATP synthase subunit beta.